We begin with the raw amino-acid sequence, 487 residues long: Probable peptidoglycan glycosyltransferase FtsW (487 aa).

9 helical membrane passes run 30 to 50, 71 to 91, 93 to 113, 122 to 142, 167 to 187, 203 to 223, 282 to 302, 332 to 352, and 358 to 378; these read VSLILLALSLMAIGLVIVTSA, IYIVLAIGAALTVMQIPMQWW, TSNAWLLLLGLVLLIAVLLVG, WLAIGPITIQAAEPAKLFFFC, VVFFAFAVLLLLQPDLGTVVV, LWQFFGLAFTGGAAVTFLIMF, FIMAILAEELGFAGVLTVLAL, IGIWFSFQTAVNVGASAGILP, and FPLLSYGGSSLIIMAAAVGLL. Disordered stretches follow at residues 398–419 and 444–487; these read KAKASTSSSRKNKPKTASSAGK and IDSI…DGYV. Polar residues predominate over residues 401–416; that stretch reads ASTSSSRKNKPKTASS. Acidic residues predominate over residues 444–453; it reads IDSIMDDFAQ.

This sequence belongs to the SEDS family. FtsW subfamily.

It localises to the cell inner membrane. It carries out the reaction [GlcNAc-(1-&gt;4)-Mur2Ac(oyl-L-Ala-gamma-D-Glu-L-Lys-D-Ala-D-Ala)](n)-di-trans,octa-cis-undecaprenyl diphosphate + beta-D-GlcNAc-(1-&gt;4)-Mur2Ac(oyl-L-Ala-gamma-D-Glu-L-Lys-D-Ala-D-Ala)-di-trans,octa-cis-undecaprenyl diphosphate = [GlcNAc-(1-&gt;4)-Mur2Ac(oyl-L-Ala-gamma-D-Glu-L-Lys-D-Ala-D-Ala)](n+1)-di-trans,octa-cis-undecaprenyl diphosphate + di-trans,octa-cis-undecaprenyl diphosphate + H(+). Its pathway is cell wall biogenesis; peptidoglycan biosynthesis. Functionally, peptidoglycan polymerase that is essential for cell division. The protein is Probable peptidoglycan glycosyltransferase FtsW of Pseudoalteromonas atlantica (strain T6c / ATCC BAA-1087).